A 610-amino-acid polypeptide reads, in one-letter code: Peptidyl-prolyl cis-trans isomerase 9 (610 aa).

S13 is subject to Phosphoserine. 3 WD repeats span residues 45-83, 88-127, and 177-216; these read MHNA…VEYI, AHNA…LVNI, and KHTA…QKPD. Residues 453–607 enclose the PPIase cyclophilin-type domain; that stretch reads LGKAAIIHTT…EPTKIINISI (155 aa).

It belongs to the cyclophilin-type PPIase family.

It localises to the nucleus. It catalyses the reaction [protein]-peptidylproline (omega=180) = [protein]-peptidylproline (omega=0). Its function is as follows. PPIases accelerate the folding of proteins. It catalyzes the cis-trans isomerization of proline imidic peptide bonds in oligopeptides. This is Peptidyl-prolyl cis-trans isomerase 9 (cyp9) from Schizosaccharomyces pombe (strain 972 / ATCC 24843) (Fission yeast).